We begin with the raw amino-acid sequence, 167 residues long: MPIRARIIGIDPGLRFTGFGIIEADGNRLRHVADGVIATDGAAAVAERLHTLDAALARLLATYAPDHAAVEETYVNRNATATLKLGYARGVALLAPARAGIAVAEYGAKTVKRAVVGTGAAEKDQVALMVRRLLPGAAITRADAADALAVAICHAHHLATASRVPAA.

Residues Asp-11, Glu-71, and Asp-143 contribute to the active site. 3 residues coordinate Mg(2+): Asp-11, Glu-71, and Asp-143.

Belongs to the RuvC family. Homodimer which binds Holliday junction (HJ) DNA. The HJ becomes 2-fold symmetrical on binding to RuvC with unstacked arms; it has a different conformation from HJ DNA in complex with RuvA. In the full resolvosome a probable DNA-RuvA(4)-RuvB(12)-RuvC(2) complex forms which resolves the HJ. Mg(2+) serves as cofactor.

It localises to the cytoplasm. The catalysed reaction is Endonucleolytic cleavage at a junction such as a reciprocal single-stranded crossover between two homologous DNA duplexes (Holliday junction).. In terms of biological role, the RuvA-RuvB-RuvC complex processes Holliday junction (HJ) DNA during genetic recombination and DNA repair. Endonuclease that resolves HJ intermediates. Cleaves cruciform DNA by making single-stranded nicks across the HJ at symmetrical positions within the homologous arms, yielding a 5'-phosphate and a 3'-hydroxyl group; requires a central core of homology in the junction. The consensus cleavage sequence is 5'-(A/T)TT(C/G)-3'. Cleavage occurs on the 3'-side of the TT dinucleotide at the point of strand exchange. HJ branch migration catalyzed by RuvA-RuvB allows RuvC to scan DNA until it finds its consensus sequence, where it cleaves and resolves the cruciform DNA. This Acidiphilium cryptum (strain JF-5) protein is Crossover junction endodeoxyribonuclease RuvC.